Consider the following 223-residue polypeptide: Neurotrophic factor BDNF precursor form (223 aa).

The N-terminal stretch at 1-5 (SCMKA) is a signal peptide. Positions 6–114 (APMKEVSIRG…AANMSMRVRR (109 aa)) are excised as a propeptide. Asn-107 carries an N-linked (GlcNAc...) asparagine glycan. Cystine bridges form between Cys-127–Cys-194 and Cys-172–Cys-223.

Belongs to the NGF-beta family.

It is found in the secreted. In terms of biological role, promotes the survival of neuronal populations that are all located either in the central nervous system or directly connected to it. This is Neurotrophic factor BDNF precursor form (BDNF) from Candoia carinata (Papuan tree boa).